The chain runs to 129 residues: Glycine cleavage system H protein (129 aa).

Residues 24 to 106 enclose the Lipoyl-binding domain; the sequence is EAVVGITEHA…YGAGWLFRIK (83 aa). At Lys65 the chain carries N6-lipoyllysine.

It belongs to the GcvH family. As to quaternary structure, the glycine cleavage system is composed of four proteins: P, T, L and H. Requires (R)-lipoate as cofactor.

In terms of biological role, the glycine cleavage system catalyzes the degradation of glycine. The H protein shuttles the methylamine group of glycine from the P protein to the T protein. This Aeromonas salmonicida (strain A449) protein is Glycine cleavage system H protein.